Reading from the N-terminus, the 447-residue chain is Oxysterols receptor LXR-alpha (447 aa).

The disordered stretch occupies residues 1 to 88; that stretch reads MSLWLEAPVP…LRPQKRKKGP (88 aa). Residues 1-96 form a transactivation AF-1; required for ligand-independent transactivation function region; sequence MSLWLEAPVP…GPAPKMLGNE (96 aa). The nuclear receptor DNA-binding region spans 95 to 170; the sequence is NELCSVCGDK…AGMREECVLS (76 aa). 2 NR C4-type zinc fingers span residues 98–118 and 134–158; these read CSVC…CEGC and CHSG…LRKC. Residues 178-203 form a disordered region; that stretch reads KMKRQEEEQAQATSAPPRASSPPQVL. A compositionally biased stretch (low complexity) spans 187-203; that stretch reads AQATSAPPRASSPPQVL. Residues 205-447 form a transactivation AF-2; required for ligand-dependent transactivation function; mediates interaction with CCAR2 region; that stretch reads QLSPEQLGMI…LLSEIWDVHE (243 aa). The NR LBD domain maps to 209–447; the sequence is EQLGMIEKLV…LLSEIWDVHE (239 aa).

It belongs to the nuclear hormone receptor family. NR1 subfamily. Heterodimer of NR1H3 and RXR (retinoic acid receptor). Interacts with CCAR2 (via N-terminus) in a ligand-independent manner. Interacts with SIRT1 and this interaction is inhibited by CCAR2. Ubiquitinated by UBR5, leading to its degradation: UBR5 specifically recognizes and binds ligand-bound NR1H3 when it is not associated with coactivators (NCOAs). In presence of NCOAs, the UBR5-degron is not accessible, preventing its ubiquitination and degradation.

It is found in the nucleus. The protein localises to the cytoplasm. In terms of biological role, nuclear receptor that exhibits a ligand-dependent transcriptional activation activity. Interaction with retinoic acid receptor (RXR) shifts RXR from its role as a silent DNA-binding partner to an active ligand-binding subunit in mediating retinoid responses through target genes defined by LXRES. LXRES are DR4-type response elements characterized by direct repeats of two similar hexanuclotide half-sites spaced by four nucleotides. Plays an important role in the regulation of cholesterol homeostasis, regulating cholesterol uptake through MYLIP-dependent ubiquitination of LDLR, VLDLR and LRP8. Interplays functionally with RORA for the regulation of genes involved in liver metabolism. Induces LPCAT3-dependent phospholipid remodeling in endoplasmic reticulum (ER) membranes of hepatocytes, driving SREBF1 processing and lipogenesis. Via LPCAT3, triggers the incorporation of arachidonate into phosphatidylcholines of ER membranes, increasing membrane dynamics and enabling triacylglycerols transfer to nascent very low-density lipoprotein (VLDL) particles. Via LPCAT3 also counteracts lipid-induced ER stress response and inflammation, likely by modulating SRC kinase membrane compartmentalization and limiting the synthesis of lipid inflammatory mediators. This Bos taurus (Bovine) protein is Oxysterols receptor LXR-alpha (NR1H3).